The sequence spans 340 residues: Dual specificity protein phosphatase 12 (340 aa).

Met-1 carries the N-acetylmethionine modification. Positions 26–171 (QMLEVQPGLY…LKLYQAMGYE (146 aa)) constitute a Tyrosine-protein phosphatase domain. Cys-115 acts as the Phosphocysteine intermediate in catalysis. Residue 116–121 (HAGVSR) participates in substrate binding. The residue at position 335 (Ser-335) is a Phosphoserine.

The protein belongs to the protein-tyrosine phosphatase family. Non-receptor class dual specificity subfamily. As to quaternary structure, monomer. Zn(2+) is required as a cofactor. As to expression, ubiquitous, highest expression in spleen, testis, ovary, and peripheral blood leukocytes and lower expression in liver and lung.

The protein resides in the nucleus. The protein localises to the cytoplasm. It localises to the cytosol. The enzyme catalyses O-phospho-L-tyrosyl-[protein] + H2O = L-tyrosyl-[protein] + phosphate. It catalyses the reaction O-phospho-L-seryl-[protein] + H2O = L-seryl-[protein] + phosphate. It carries out the reaction O-phospho-L-threonyl-[protein] + H2O = L-threonyl-[protein] + phosphate. In terms of biological role, dual specificity phosphatase; can dephosphorylate both phosphotyrosine and phosphoserine or phosphothreonine residues. Can dephosphorylate glucokinase (in vitro). Has phosphatase activity with the synthetic substrate 6,8-difluoro-4-methylumbelliferyl phosphate and other in vitro substrates. This Homo sapiens (Human) protein is Dual specificity protein phosphatase 12 (DUSP12).